We begin with the raw amino-acid sequence, 316 residues long: 4-hydroxyphenylacetate decarboxylase activating enzyme (316 aa).

The Radical SAM core domain occupies 20–307; it reads HDGPGCRTTV…QDIFLDNGIA (288 aa). Residues cysteine 34, cysteine 38, cysteine 41, cysteine 60, cysteine 66, cysteine 69, and cysteine 105 each coordinate [4Fe-4S] cluster. 40-42 contributes to the S-adenosyl-L-methionine binding site; that stretch reads WCA. The 4Fe-4S ferredoxin-type domain occupies 84 to 115; sequence NKPVIDWNICKDCESFECVNSCYYNAFKLCAK. S-adenosyl-L-methionine contacts are provided by residues glycine 144, 193 to 195, and histidine 267; that span reads DIK.

It belongs to the organic radical-activating enzymes family. As to quaternary structure, monomer. The cofactor is [4Fe-4S] cluster.

The enzyme catalyses glycyl-[protein] + reduced [flavodoxin] + S-adenosyl-L-methionine = glycin-2-yl radical-[protein] + semiquinone [flavodoxin] + 5'-deoxyadenosine + L-methionine + H(+). Functionally, catalyzes activation of 4-hydroxyphenylacetate decarboxylase under anaerobic conditions by generation of an organic free radical on a glycine residue, via a homolytic cleavage of S-adenosyl-L-methionine (SAM). This is 4-hydroxyphenylacetate decarboxylase activating enzyme from Clostridioides difficile (strain CD196) (Peptoclostridium difficile).